The following is a 472-amino-acid chain: Regulator of G-protein signaling 6 (472 aa).

The DEP domain maps to 40–115 (KTGGVPIRTV…DDGTFYRFQA (76 aa)). The 70-residue stretch at 261–330 (IRKQITFLNA…MSKEPSQQRV (70 aa)) folds into the G protein gamma domain. The RGS domain maps to 336–441 (SFDEILKDQV…LMKSDSYARF (106 aa)).

As to quaternary structure, interacts with GNB5. Interacts with RGS7BP, leading to regulate the subcellular location of the heterodimer formed with GNB5. Interacts with GNAI1.

It is found in the cytoplasm. Its subcellular location is the cytosol. It localises to the membrane. The protein resides in the nucleus. The protein localises to the cell membrane. Its function is as follows. Regulates G protein-coupled receptor signaling cascades. Inhibits signal transduction by increasing the GTPase activity of G protein alpha subunits, thereby driving them into their inactive GDP-bound form. The RGS6/GNB5 dimer enhances GNAO1 GTPase activity. This is Regulator of G-protein signaling 6 (RGS6) from Homo sapiens (Human).